The following is a 663-amino-acid chain: UvrABC system protein B (663 aa).

The segment covering 1–10 (MIDKRDDKPF) has biased composition (basic and acidic residues). Positions 1–23 (MIDKRDDKPFKLKSKYKPSGDQP) are disordered. The 388-residue stretch at 31–418 (DNIEGGEKAQ…TNTIIEQIIR (388 aa)) folds into the Helicase ATP-binding domain. 44–51 (GATGTGKT) is an ATP binding site. A Beta-hairpin motif is present at residues 97 to 120 (YYDYYQPEAYVPSSDTYIEKDSSV). The 167-residue stretch at 435 to 601 (QMDDLLGEIN…TIKKDIRGLI (167 aa)) folds into the Helicase C-terminal domain. One can recognise a UVR domain in the interval 627–662 (KEAINALQKQMQEAAELLDFELAAQMRDLILELKLM).

This sequence belongs to the UvrB family. As to quaternary structure, forms a heterotetramer with UvrA during the search for lesions. Interacts with UvrC in an incision complex.

The protein resides in the cytoplasm. Its function is as follows. The UvrABC repair system catalyzes the recognition and processing of DNA lesions. A damage recognition complex composed of 2 UvrA and 2 UvrB subunits scans DNA for abnormalities. Upon binding of the UvrA(2)B(2) complex to a putative damaged site, the DNA wraps around one UvrB monomer. DNA wrap is dependent on ATP binding by UvrB and probably causes local melting of the DNA helix, facilitating insertion of UvrB beta-hairpin between the DNA strands. Then UvrB probes one DNA strand for the presence of a lesion. If a lesion is found the UvrA subunits dissociate and the UvrB-DNA preincision complex is formed. This complex is subsequently bound by UvrC and the second UvrB is released. If no lesion is found, the DNA wraps around the other UvrB subunit that will check the other stand for damage. This chain is UvrABC system protein B, found in Streptococcus pyogenes serotype M28 (strain MGAS6180).